The primary structure comprises 151 residues: uncharacterized protein (151 aa).

The segment at 1 to 48 (MRMAPTESTEGRRLWPGPREGGSGKETTSEKLSNLPRPHSYSPKRADA) is disordered.

This is an uncharacterized protein from Homo sapiens (Human).